A 454-amino-acid polypeptide reads, in one-letter code: tRNA modification GTPase MnmE (454 aa).

(6S)-5-formyl-5,6,7,8-tetrahydrofolate contacts are provided by R23, E80, and K120. One can recognise a TrmE-type G domain in the interval G216–G377. Position 226 (N226) interacts with K(+). GTP contacts are provided by residues N226–S231, T245–T251, D270–G273, N335–D338, and S358–R360. Residue S230 coordinates Mg(2+). Residues T245, I247, and T250 each coordinate K(+). Residue T251 coordinates Mg(2+). K454 contributes to the (6S)-5-formyl-5,6,7,8-tetrahydrofolate binding site.

Belongs to the TRAFAC class TrmE-Era-EngA-EngB-Septin-like GTPase superfamily. TrmE GTPase family. In terms of assembly, homodimer. Heterotetramer of two MnmE and two MnmG subunits. It depends on K(+) as a cofactor.

The protein localises to the cytoplasm. In terms of biological role, exhibits a very high intrinsic GTPase hydrolysis rate. Involved in the addition of a carboxymethylaminomethyl (cmnm) group at the wobble position (U34) of certain tRNAs, forming tRNA-cmnm(5)s(2)U34. The chain is tRNA modification GTPase MnmE from Yersinia enterocolitica serotype O:8 / biotype 1B (strain NCTC 13174 / 8081).